The primary structure comprises 339 residues: Biotin synthase (339 aa).

A Radical SAM core domain is found at 55 to 282 (NAVQLSTLLS…KAVVRLSAGR (228 aa)). Positions 70, 74, and 77 each coordinate [4Fe-4S] cluster. [2Fe-2S] cluster is bound by residues Cys-114, Cys-145, Cys-205, and Arg-277.

The protein belongs to the radical SAM superfamily. Biotin synthase family. Homodimer. It depends on [4Fe-4S] cluster as a cofactor. [2Fe-2S] cluster serves as cofactor.

It carries out the reaction (4R,5S)-dethiobiotin + (sulfur carrier)-SH + 2 reduced [2Fe-2S]-[ferredoxin] + 2 S-adenosyl-L-methionine = (sulfur carrier)-H + biotin + 2 5'-deoxyadenosine + 2 L-methionine + 2 oxidized [2Fe-2S]-[ferredoxin]. Its pathway is cofactor biosynthesis; biotin biosynthesis; biotin from 7,8-diaminononanoate: step 2/2. Catalyzes the conversion of dethiobiotin (DTB) to biotin by the insertion of a sulfur atom into dethiobiotin via a radical-based mechanism. The sequence is that of Biotin synthase from Burkholderia cenocepacia (strain ATCC BAA-245 / DSM 16553 / LMG 16656 / NCTC 13227 / J2315 / CF5610) (Burkholderia cepacia (strain J2315)).